The chain runs to 69 residues: Pleurain-A4 (69 aa).

The first 22 residues, 1-22 (MFTLKKTLLLLFFLGTISISLC), serve as a signal peptide directing secretion. The propeptide occupies 23–43 (KQERDADEDDGRKMTEEEVKR). A disulfide bond links cysteine 63 and cysteine 69.

It belongs to the frog skin active peptide (FSAP) family. Pleurain subfamily. Expressed by the skin glands.

It is found in the secreted. Functionally, antimicrobial peptide. Has activity against Gram-positive and -negative bacteria, and fungi. Has little hemolytic activity on red blood cells. The sequence is that of Pleurain-A4 from Nidirana pleuraden (Yunnan pond frog).